Consider the following 226-residue polypeptide: MNPIVINRLQRKLGYTFQQQELLLQALTHRSASSKHNERLEFLGDSILSFVIANELYRRFPRVDEGDMSRMRATLVRGNTLAEMAREFDLGECLRLGPGELKSGGFRRESILADTVEALIGGIFLDSDIHTIERLILAWYHSRLEEISPGDKQKDPKTRLQEYLQGRHLPLPSYLVVQVRGEAHDQEFTIHCQVSGLNEPVIGTGSSRRKAEQAAAEQALKQLELE.

The region spanning 6–128 (INRLQRKLGY…LIGGIFLDSD (123 aa)) is the RNase III domain. Position 41 (Glu41) interacts with Mg(2+). Asp45 is an active-site residue. Residues Asp114 and Glu117 each coordinate Mg(2+). The active site involves Glu117. One can recognise a DRBM domain in the interval 155-225 (DPKTRLQEYL…AEQALKQLEL (71 aa)).

It belongs to the ribonuclease III family. In terms of assembly, homodimer. Mg(2+) serves as cofactor.

The protein resides in the cytoplasm. It catalyses the reaction Endonucleolytic cleavage to 5'-phosphomonoester.. Its function is as follows. Digests double-stranded RNA. Involved in the processing of primary rRNA transcript to yield the immediate precursors to the large and small rRNAs (23S and 16S). Processes some mRNAs, and tRNAs when they are encoded in the rRNA operon. Processes pre-crRNA and tracrRNA of type II CRISPR loci if present in the organism. The sequence is that of Ribonuclease 3 from Yersinia enterocolitica serotype O:8 / biotype 1B (strain NCTC 13174 / 8081).